Reading from the N-terminus, the 384-residue chain is Somatostatin receptor type 4 (384 aa).

The interval 1-34 (MNTPATLPLGGEDTTWTPGINASWAPDEEEDAVR) is disordered. The Extracellular segment spans residues 1-41 (MNTPATLPLGGEDTTWTPGINASWAPDEEEDAVRSDGTGTA). Asparagine 21 carries an N-linked (GlcNAc...) asparagine glycan. The chain crosses the membrane as a helical span at residues 42–69 (GMVTIQCIYALVCLVGLVGNALVIFVIL). At 70-79 (RYAKMKTATN) the chain is on the cytoplasmic side. A helical transmembrane segment spans residues 80-105 (IYLLNLAVADELFMLSVPFVASAAAL). Residues 106 to 116 (RHWPFGAVLCR) are Extracellular-facing. A disulfide bridge connects residues cysteine 115 and cysteine 194. The chain crosses the membrane as a helical span at residues 117–138 (AVLSVDGLNMFTSVFCLTVLSV). Over 139-160 (DRYVAVVHPLRAATYRRPSVAK) the chain is Cytoplasmic. Residues 161 to 181 (LINLGVWLASLLVTLPIAVFA) form a helical membrane-spanning segment. The Extracellular segment spans residues 182–203 (DTRPARGGEAVACNLHWPHPAW). A helical membrane pass occupies residues 204-228 (SAVFVIYTFLLGFLLPVLAIGLCYL). Over 229-254 (LIVGKMRAVALRAGWQQRRRSEKKIT) the chain is Cytoplasmic. The helical transmembrane segment at 255 to 280 (RLVLMVVTVFVLCWMPFYVVQLLNLF) threads the bilayer. Residues 281–287 (VTSLDAT) lie on the Extracellular side of the membrane. The chain crosses the membrane as a helical span at residues 288 to 311 (VNHVSLILSYANSCANPILYGFLS). The Cytoplasmic portion of the chain corresponds to 312–384 (DNFRRSFQRV…RVPFTKTTTF (73 aa)). The S-palmitoyl cysteine moiety is linked to residue cysteine 323.

It belongs to the G-protein coupled receptor 1 family. As to expression, brain, lung, heart and islets. Moderate levels in the hippocampus, cortex and olfactory bulb.

The protein resides in the cell membrane. Receptor for somatostatin-14. The activity of this receptor is mediated by G proteins which inhibits adenylyl cyclase. It is functionally coupled not only to inhibition of adenylate cyclase, but also to activation of both arachidonate release and mitogen-activated protein (MAP) kinase cascade. This Rattus norvegicus (Rat) protein is Somatostatin receptor type 4 (Sstr4).